The following is a 382-amino-acid chain: MTDQRPLTIALVAGETSGDILGAGLIRALKERVPNARFVGVAGPRMQAEGCEAWYEIEELAVMGIVEVLGRLRRLLHIRADLTKRFGELKPDVFVGIDAPDFNITLEGNLKKQGIKTIHYVSPSVWAWRQKRVFKIGRATDLVLAFLPFEKAFYDKYNVPCRFIGHTMADAMPLDPDKNGARDVLGIPYDAHCLALLPGSRGAEVEMLSADFLKTAQLLRQTYPDLEIVVPLVNAKRREQFERIKAEVAPDLSVHLLDGMGREAMVASDAALLASGTAALECMLAKCPMVVGYRMKPFTFWLAKRLVKTDYVSLPNLLAGRELVKELLQEECEPQKLAAALLPLLANGKTSHAMHDTFRELHQQIRCNADEQAAQAVLELAQ.

The protein belongs to the LpxB family.

It catalyses the reaction 2-N,3-O-bis[(3R)-3-hydroxytetradecanoyl]-alpha-D-glucosaminyl 1-phosphate + UDP-2-N,3-O-bis[(3R)-3-hydroxytetradecanoyl]-alpha-D-glucosamine = lipid A disaccharide (E. coli) + UDP + H(+). The enzyme catalyses a lipid X + a UDP-2-N,3-O-bis[(3R)-3-hydroxyacyl]-alpha-D-glucosamine = a lipid A disaccharide + UDP + H(+). Its pathway is glycolipid biosynthesis; lipid IV(A) biosynthesis; lipid IV(A) from (3R)-3-hydroxytetradecanoyl-[acyl-carrier-protein] and UDP-N-acetyl-alpha-D-glucosamine: step 5/6. Condensation of UDP-2,3-diacylglucosamine and 2,3-diacylglucosamine-1-phosphate to form lipid A disaccharide, a precursor of lipid A, a phosphorylated glycolipid that anchors the lipopolysaccharide to the outer membrane of the cell. The protein is Lipid-A-disaccharide synthase of Shigella flexneri serotype 5b (strain 8401).